Consider the following 66-residue polypeptide: VRDAYIAQNYNCVYDCARDAYCNDLCTKNGAKSGYCEWFGPHGDACWCIDLPNNVPIKVEGKCHRK.

Positions 2–64 (RDAYIAQNYN…VPIKVEGKCH (63 aa)) constitute an LCN-type CS-alpha/beta domain. Intrachain disulfides connect Cys-12-Cys-63, Cys-16-Cys-36, Cys-22-Cys-46, and Cys-26-Cys-48.

Belongs to the long (4 C-C) scorpion toxin superfamily. Sodium channel inhibitor family. Alpha subfamily. As to expression, expressed by the venom gland.

The protein resides in the secreted. Alpha toxins bind voltage-independently at site-3 of sodium channels (Nav) and inhibit the inactivation of the activated channels, thereby blocking neuronal transmission. This is Toxin Boma6a from Buthus occitanus mardochei (Moroccan scorpion).